The primary structure comprises 474 residues: Trehalose-6-phosphate synthase (474 aa).

A D-glucose 6-phosphate-binding site is contributed by R10. 22–23 (GG) provides a ligand contact to UDP-alpha-D-glucose. Residues Y77 and D131 each contribute to the D-glucose 6-phosphate site. R263 and K268 together coordinate UDP-alpha-D-glucose. R301 contacts D-glucose 6-phosphate. UDP-alpha-D-glucose contacts are provided by residues F340 and 366-370 (LVAKE).

Belongs to the glycosyltransferase 20 family. In terms of assembly, homotetramer.

It catalyses the reaction D-glucose 6-phosphate + UDP-alpha-D-glucose = alpha,alpha-trehalose 6-phosphate + UDP + H(+). The protein operates within glycan biosynthesis; trehalose biosynthesis. Functionally, probably involved in the osmoprotection via the biosynthesis of trehalose. Catalyzes the transfer of glucose from UDP-alpha-D-glucose (UDP-Glc) to D-glucose 6-phosphate (Glc-6-P) to form trehalose-6-phosphate. Acts with retention of the anomeric configuration of the UDP-sugar donor. This is Trehalose-6-phosphate synthase from Pseudomonas savastanoi (Pseudomonas syringae pv. savastanoi).